We begin with the raw amino-acid sequence, 368 residues long: tRNA-specific 2-thiouridylase MnmA (368 aa).

Residues 12–19 and Met38 contribute to the ATP site; that span reads AMSGGVDS. An interaction with target base in tRNA region spans residues 98–100; that stretch reads NPD. Catalysis depends on Cys103, which acts as the Nucleophile. Cys103 and Cys200 are joined by a disulfide. Residue Gly128 coordinates ATP. Positions 150-152 are interaction with tRNA; sequence KDQ. Cys200 functions as the Cysteine persulfide intermediate in the catalytic mechanism. Residues 312–313 form an interaction with tRNA region; that stretch reads RY.

It belongs to the MnmA/TRMU family. Interacts with TusE.

It is found in the cytoplasm. It carries out the reaction S-sulfanyl-L-cysteinyl-[protein] + uridine(34) in tRNA + AH2 + ATP = 2-thiouridine(34) in tRNA + L-cysteinyl-[protein] + A + AMP + diphosphate + H(+). Catalyzes the 2-thiolation of uridine at the wobble position (U34) of tRNA(Lys), tRNA(Glu) and tRNA(Gln), leading to the formation of s(2)U34, the first step of tRNA-mnm(5)s(2)U34 synthesis. Sulfur is provided by IscS, via a sulfur-relay system. Binds ATP and its substrate tRNAs. The protein is tRNA-specific 2-thiouridylase MnmA of Buchnera aphidicola subsp. Acyrthosiphon pisum (strain APS) (Acyrthosiphon pisum symbiotic bacterium).